The primary structure comprises 124 residues: Late embryogenesis abundant protein 37 (124 aa).

The N-terminal 35 residues, 1–35 (MSQSLFNLKSLSRSINNTIRMRRYIVITKASQRAY), are a transit peptide targeting the mitochondrion.

Belongs to the LEA type 3 family.

The protein resides in the mitochondrion. This is Late embryogenesis abundant protein 37 from Arabidopsis thaliana (Mouse-ear cress).